Reading from the N-terminus, the 385-residue chain is MKLVRKDIEKDNAGQVTLVPEEPEDMWHTYNLVQVGDSLRASTIRKVQTESSTGSVGSNRVRTTLTLCVEAIDFDSQACQLRVKGTNIQENEYVKMGAYHTIELEPNRQFTLAKKQWDSVVLERIEQACDPAWSADVAAVVMQEGLAHICLVTPSMTLTRAKVEVNIPRKRKGNCSQHDRALERFYEQVVQAIQRHIHFDVVKCVLVASPGFVREQFCDYMFQQAVKTDNKVLLENRSKFLQVHASSGHKYSLKEALCDPTVASRLSDTKAAGEVKALDDFYKMLQHEPDRAFYGLKQVEKANEAMAIDTLLISDELFRHQDVATRSRYVRLVDSVKENAGTVRIFSSLHVSGEQLSQLTGIAAILRFPVPELSDQENDSSSEED.

Lys162 participates in a covalent cross-link: Glycyl lysine isopeptide (Lys-Gly) (interchain with G-Cter in SUMO2). Phosphoserine occurs at positions 374, 380, 381, and 382.

Belongs to the eukaryotic release factor 1 family. Pelota subfamily. Component of the Pelota-HBS1L complex, also named Dom34-Hbs1 complex, composed of PELO and HBS1L. Interacts with PINK1. Interacts with ABCE1. Interacts with CNOT4. A divalent metal cation is required as a cofactor.

The protein localises to the cytoplasm. In terms of biological role, component of the Pelota-HBS1L complex, a complex that recognizes stalled ribosomes and triggers the No-Go Decay (NGD) pathway. In the Pelota-HBS1L complex, PELO recognizes ribosomes stalled at the 3' end of an mRNA and engages stalled ribosomes by destabilizing mRNA in the mRNA channel. Following mRNA extraction from stalled ribosomes by the SKI complex, the Pelota-HBS1L complex promotes recruitment of ABCE1, which drives the disassembly of stalled ribosomes, followed by degradation of damaged mRNAs as part of the NGD pathway. As part of the PINK1-regulated signaling, upon mitochondrial damage is recruited to the ribosome/mRNA-ribonucleoprotein complex associated to mitochondrial outer membrane thereby enabling the recruitment of autophagy receptors and induction of mitophagy. This is Protein pelota homolog (PELO) from Bos taurus (Bovine).